The sequence spans 468 residues: N-acyl-phosphatidylethanolamine-hydrolyzing phospholipase D, mitochondrial (468 aa).

The N-terminal 39 residues, 1–39 (MNFVTCHVQMRLLLQRRLVRLRESELFRPQTSLSTFKRH), are a transit peptide targeting the mitochondrion. A helical transmembrane segment spans residues 54–76 (YARILLLSVLVPYTGYAFYVSLA). Positions 265, 267, 269, 270, 332, and 425 each coordinate Zn(2+).

It belongs to the NAPE-PLD family. The cofactor is Zn(2+).

It localises to the mitochondrion membrane. The enzyme catalyses an N-acyl-1,2-diacyl-sn-glycero-3-phosphoethanolamine + H2O = an N-acylethanolamine + a 1,2-diacyl-sn-glycero-3-phosphate + H(+). Functionally, hydrolyzes N-acyl-phosphatidylethanolamines (NAPEs) to produce N-acylethanolamines (NAEs). The sequence is that of N-acyl-phosphatidylethanolamine-hydrolyzing phospholipase D, mitochondrial (FMP30) from Saccharomyces cerevisiae (strain ATCC 204508 / S288c) (Baker's yeast).